We begin with the raw amino-acid sequence, 876 residues long: Serrate RNA effector molecule homolog (876 aa).

The interval 1 to 90 (MGDSDDEYDR…RRDWDEHSSD (90 aa)) is disordered. At Gly2 the chain carries N-acetylglycine. Residue Ser4 is modified to Phosphoserine. Tyr8 carries the post-translational modification Phosphotyrosine. The segment covering 8–73 (YDRRRRDKFR…ERFSPPRHEL (66 aa)) has biased composition (basic and acidic residues). A phosphoserine mark is found at Ser67, Ser74, and Ser136. Residue Lys150 forms a Glycyl lysine isopeptide (Lys-Gly) (interchain with G-Cter in SUMO2) linkage. The segment at 271–412 (EEEEEQAGKP…KPKDAAGLEC (142 aa)) is disordered. The segment covering 297–347 (DGERKTNDKDEKKEDGKQAENDSSNDDKTKKSEGDGDKEEKKEDSEKEAKK) has biased composition (basic and acidic residues). Over residues 370–387 (SESESESGQAEEEKEEAE) the composition is skewed to acidic residues. Positions 388–412 (EALKEKEKPKEEEWEKPKDAAGLEC) are enriched in basic and acidic residues. Residues Ser493 and Ser540 each carry the phosphoserine modification. Thr544 carries the phosphothreonine modification. At Ser570 the chain carries Phosphoserine. A disordered region spans residues 575–598 (ELLGSSGGAPPEEPPKEGNPAEIN). Thr671 is modified (phosphothreonine). The residue at position 679 (Ser679) is a Phosphoserine. 3 positions are modified to omega-N-methylarginine: Arg833, Arg840, and Arg850. The tract at residues 835–854 (NYDAFRGQGGYPGKPRNRMV) is disordered.

It belongs to the ARS2 family. As to quaternary structure, interacts with NCBP1 and DROSHA. Interacts with CASP8AP2 and ERBB4. Interacts with LUZP4. Interacts with NCBP2/CBP20 and NCBP3. Interacts with MTREX. In terms of tissue distribution, ubiquitously expressed.

The protein resides in the nucleus. Its subcellular location is the nucleoplasm. It is found in the cytoplasm. Functionally, acts as a mediator between the cap-binding complex (CBC) and the primary microRNAs (miRNAs) processing machinery during cell proliferation. Contributes to the stability and delivery of capped primary miRNA transcripts to the primary miRNA processing complex containing DGCR8 and DROSHA, thereby playing a role in RNA-mediated gene silencing (RNAi) by miRNAs. Binds capped RNAs (m7GpppG-capped RNA); however interaction is probably mediated via its interaction with NCBP1/CBP80 component of the CBC complex. Involved in cell cycle progression at S phase. Does not directly confer arsenite resistance but rather modulates arsenic sensitivity. Independently of its activity on miRNAs, necessary and sufficient to promote neural stem cell self-renewal. Does so by directly binding SOX2 promoter and positively regulating its transcription. This chain is Serrate RNA effector molecule homolog (SRRT), found in Homo sapiens (Human).